The chain runs to 34 residues: MSDIN-like toxin proprotein 4 (34 aa).

Positions methionine 1–proline 10 are excised as a propeptide. The cyclopeptide (Leu-Pro) cross-link spans leucine 11 to proline 20. Positions cysteine 21 to glutamate 34 are excised as a propeptide.

The protein belongs to the MSDIN fungal toxin family. Post-translationally, processed by the macrocyclase-peptidase enzyme POPB to yield a toxic cyclic decapeptide. POPB first removes 10 residues from the N-terminus. Conformational trapping of the remaining peptide forces the enzyme to release this intermediate rather than proceed to macrocyclization. The enzyme rebinds the remaining peptide in a different conformation and catalyzes macrocyclization of the N-terminal 10 residues.

Functionally, probable toxin that belongs to the MSDIN-like toxin family responsible for a large number of food poisoning cases and deaths. The polypeptide is MSDIN-like toxin proprotein 4 (Amanita bisporigera (Destroying angel)).